Here is a 94-residue protein sequence, read N- to C-terminus: UPF0213 protein BH0048 (94 aa).

The GIY-YIG domain maps to 1–76 (MNHYVYILEC…KHLSRRKKEQ (76 aa)).

Belongs to the UPF0213 family.

This is UPF0213 protein BH0048 from Halalkalibacterium halodurans (strain ATCC BAA-125 / DSM 18197 / FERM 7344 / JCM 9153 / C-125) (Bacillus halodurans).